The following is a 28-amino-acid chain: MSEARNLFTTFGILAILLFFLYLIYAVL.

Residues 7-27 form a helical membrane-spanning segment; it reads LFTTFGILAILLFFLYLIYAV.

Interacts with SERCA. In terms of tissue distribution, strongly expressed in embryonic and larval somatic muscles and postembryonic heart.

Its subcellular location is the sarcoplasmic reticulum membrane. The protein localises to the cell membrane. The protein resides in the sarcolemma. It localises to the T-tubule. Functionally, plays an essential role in the regulation of calcium transport at the sarcoplasmic reticulum (SR), which is secondarily required for regular muscle contraction. The chain is Sarcolamban A from Drosophila melanogaster (Fruit fly).